We begin with the raw amino-acid sequence, 216 residues long: Ribose-5-phosphate isomerase A (216 aa).

Substrate-binding positions include 26 to 29 (TGST), 79 to 82 (DGAD), and 92 to 95 (KGGG). Glutamate 101 functions as the Proton acceptor in the catalytic mechanism. Lysine 119 serves as a coordination point for substrate.

The protein belongs to the ribose 5-phosphate isomerase family. As to quaternary structure, homodimer.

It catalyses the reaction aldehydo-D-ribose 5-phosphate = D-ribulose 5-phosphate. It participates in carbohydrate degradation; pentose phosphate pathway; D-ribose 5-phosphate from D-ribulose 5-phosphate (non-oxidative stage): step 1/1. Catalyzes the reversible conversion of ribose-5-phosphate to ribulose 5-phosphate. The polypeptide is Ribose-5-phosphate isomerase A (Legionella pneumophila (strain Lens)).